The primary structure comprises 399 residues: Calsequestrin-2 (399 aa).

The N-terminal stretch at 1–19 (MKRTHLFIVGIYFLSSCRA) is a signal peptide. Tyr282 is subject to Phosphotyrosine. A glycan (N-linked (GlcNAc...) asparagine) is linked at Asn335. The interval 365–399 (VLSGKINTEDDDEDDDDDDNSDEEDNDDSDDDDDE) is disordered. A compositionally biased stretch (acidic residues) spans 373 to 399 (EDDDEDDDDDDNSDEEDNDDSDDDDDE). 2 positions are modified to phosphoserine: Ser385 and Ser393.

The protein belongs to the calsequestrin family. As to quaternary structure, monomer, homodimer and homooligomer. Mostly monomeric in the absence of calcium. Forms higher oligomers in a calcium-dependent manner. Dimers associate to form tetramers, that then form linear homomer chains. Interacts with ASPH and TRDN. In terms of processing, phosphorylation in the C-terminus, probably by CK2, moderately increases calcium buffering capacity. Post-translationally, N-glycosylated.

It is found in the sarcoplasmic reticulum lumen. In terms of biological role, calsequestrin is a high-capacity, moderate affinity, calcium-binding protein and thus acts as an internal calcium store in muscle. Calcium ions are bound by clusters of acidic residues at the protein surface, especially at the interface between subunits. Can bind around 60 Ca(2+) ions. Regulates the release of lumenal Ca(2+) via the calcium release channel RYR2; this plays an important role in triggering muscle contraction. Plays a role in excitation-contraction coupling in the heart and in regulating the rate of heart beats. The polypeptide is Calsequestrin-2 (CASQ2) (Homo sapiens (Human)).